The chain runs to 291 residues: Verruculogen synthase (291 aa).

Tyr-68 is an active-site residue.

It belongs to the PhyH family. In terms of assembly, homodimer. Fe cation serves as cofactor.

The catalysed reaction is fumitremorgin B + 2-oxoglutarate + AH2 + 2 O2 = verruculogen + succinate + A + CO2 + H2O. Its pathway is mycotoxin biosynthesis. Its function is as follows. Verruculogen synthase; part of the gene cluster that mediates the biosynthesis of fumitremorgins, indole alkaloids that carry not only intriguing chemical structures, but also interesting biological and pharmacological activities. The biosynthesis of fumitremorgin-type alkaloids begins by condensation of the two amino acids L-tryptophan and L-proline to brevianamide F, catalyzed by the non-ribosomal peptide synthetase ftmA. Brevianamide F is then prenylated by the prenyltransferase ftmPT1/ftmB in the presence of dimethylallyl diphosphate, resulting in the formation of tryprostatin B. The three cytochrome P450 monooxygenases, ftmP450-1/ftmC, ftmP450-2/ftmE and ftmP450-3/FtmG, are responsible for the conversion of tryprostatin B to 6-hydroxytryprostatin B, tryprostatin A to fumitremorgin C and fumitremorgin C to 12,13-dihydroxyfumitremorgin C, respectively. The putative methyltransferase ftmMT/ftmD is expected for the conversion of 6-hydroxytryprostatin B to tryprostatin A. FtmPT2/FtmH catalyzes the prenylation of 12,13-dihydroxyfumitre-morgin C in the presence of dimethylallyl diphosphate, resulting in the formation of fumitremorgin B. Fumitremorgin B is further converted to verruculogen by ftmOx1/ftmF via the insertion of an endoperoxide bond between the two prenyl moieties. In some fungal species, verruculogen is further converted to fumitremorgin A, but the enzymes involved in this step have not been identified yet. This is Verruculogen synthase from Aspergillus fumigatus (Neosartorya fumigata).